Reading from the N-terminus, the 360-residue chain is UDP-N-acetylglucosamine--N-acetylmuramyl-(pentapeptide) pyrophosphoryl-undecaprenol N-acetylglucosamine transferase (360 aa).

UDP-N-acetyl-alpha-D-glucosamine-binding positions include 15–17 (TGG), Asn-127, Arg-163, Ser-191, Ile-249, 268–273 (ALTVSE), and Gln-293.

This sequence belongs to the glycosyltransferase 28 family. MurG subfamily.

The protein resides in the cell inner membrane. The catalysed reaction is di-trans,octa-cis-undecaprenyl diphospho-N-acetyl-alpha-D-muramoyl-L-alanyl-D-glutamyl-meso-2,6-diaminopimeloyl-D-alanyl-D-alanine + UDP-N-acetyl-alpha-D-glucosamine = di-trans,octa-cis-undecaprenyl diphospho-[N-acetyl-alpha-D-glucosaminyl-(1-&gt;4)]-N-acetyl-alpha-D-muramoyl-L-alanyl-D-glutamyl-meso-2,6-diaminopimeloyl-D-alanyl-D-alanine + UDP + H(+). Its pathway is cell wall biogenesis; peptidoglycan biosynthesis. Its function is as follows. Cell wall formation. Catalyzes the transfer of a GlcNAc subunit on undecaprenyl-pyrophosphoryl-MurNAc-pentapeptide (lipid intermediate I) to form undecaprenyl-pyrophosphoryl-MurNAc-(pentapeptide)GlcNAc (lipid intermediate II). This is UDP-N-acetylglucosamine--N-acetylmuramyl-(pentapeptide) pyrophosphoryl-undecaprenol N-acetylglucosamine transferase from Proteus mirabilis (strain HI4320).